The primary structure comprises 566 residues: Folate-like transporter DDB_G0272544 (566 aa).

Residues 24-81 (RNQDEDENENENNDNLENDNNKRNYISINNYEPYKEIDNNNNKNNNNNNIINNNNKIN) are a coiled coil. The interval 25-46 (NQDEDENENENNDNLENDNNKR) is disordered. A compositionally biased stretch (acidic residues) spans 27–40 (DEDENENENNDNLE). 11 helical membrane-spanning segments follow: residues 148-168 (VFLL…IIII), 171-191 (VAKI…WMIL), 194-214 (ITEG…YFSL), 226-246 (VNAG…LLVE), 252-272 (VYLL…ALGF), 304-324 (IWSG…QNLF), 332-352 (SWNG…AIIP), 364-384 (GIIL…MGFG), 388-408 (VVSA…SPIV), 420-440 (IGVL…LVQS), and 458-478 (YGAC…FLFL). Residues 517-544 (YNANIIDFENNNNNNNNNNNNNNNNNNN) are a coiled coil. The segment covering 526–556 (NNNNNNNNNNNNNNNNNNNNNNNNNNNNNNN) has biased composition (low complexity). A disordered region spans residues 526 to 566 (NNNNNNNNNNNNNNNNNNNNNNNNNNNNNNNVGIGGNDNFK).

Belongs to the reduced folate carrier (RFC) transporter (TC 2.A.48) family.

It localises to the membrane. Folate transporter. The protein is Folate-like transporter DDB_G0272544 of Dictyostelium discoideum (Social amoeba).